The following is a 696-amino-acid chain: UvrABC system protein C (696 aa).

In terms of domain architecture, GIY-YIG spans 16 to 95 (TEPGVYKFRD…IKRFDPRFNV (80 aa)). One can recognise a UVR domain in the interval 208–243 (DKVTRKLNADMMAAAEELDFERAARLRDDLEAIDKV).

The protein belongs to the UvrC family. Interacts with UvrB in an incision complex.

The protein resides in the cytoplasm. In terms of biological role, the UvrABC repair system catalyzes the recognition and processing of DNA lesions. UvrC both incises the 5' and 3' sides of the lesion. The N-terminal half is responsible for the 3' incision and the C-terminal half is responsible for the 5' incision. The chain is UvrABC system protein C from Corynebacterium glutamicum (strain ATCC 13032 / DSM 20300 / JCM 1318 / BCRC 11384 / CCUG 27702 / LMG 3730 / NBRC 12168 / NCIMB 10025 / NRRL B-2784 / 534).